An 88-amino-acid chain; its full sequence is Small ribosomal subunit protein bS16 (88 aa).

It belongs to the bacterial ribosomal protein bS16 family.

This is Small ribosomal subunit protein bS16 from Syntrophomonas wolfei subsp. wolfei (strain DSM 2245B / Goettingen).